We begin with the raw amino-acid sequence, 147 residues long: Small ribosomal subunit protein eS19 (147 aa).

The protein belongs to the eukaryotic ribosomal protein eS19 family. As to quaternary structure, component of the small ribosomal subunit.

The protein resides in the cytoplasm. Its subcellular location is the nucleus. Component of the small ribosomal subunit. The ribosome is a large ribonucleoprotein complex responsible for the synthesis of proteins in the cell. Required for pre-rRNA processing and maturation of 40S ribosomal subunits. In Ictalurus punctatus (Channel catfish), this protein is Small ribosomal subunit protein eS19 (rps19).